The chain runs to 1083 residues: MRTTPTFPTKTFKPTAMALAVATTLSACLGGGGGGTSAPDFNAGGTGIGSNSRATTAKSAAVSYAGIKNEMCKDRSMLCAGRDDVAVTDRDAKINRPPPPNLHTGDFPNPNDAYKNLINLKPAIEAGYTGRGVEVGIVDTGESVGSISFPELYGRKEHGYNENYKNYTAYMRKEAPEDGGGKDIEASFDDEAVIETEAKPTDIRHVKEIGHIDLVSHIIGGRSVDGRPAGGIAPDATLHIMNTNDGTKNEMMVAAIRNAWVKLGERGVRIVNNSFGTTSRAGTADLFQIANSEEQYRQALLDYSGGDKTDEGIRLMQQSDYGNLSYHIRNKNMLFIFSTGNDAQAQPNTYALLPFYEKDAQKGIITVAGVDRSGEKFKREMYGEPGTEPLEYGSNHCGITAMWCLSAPYEASVRFTRTNPIQIAGTSFSAPIVTGTAALLLQKYPWMSNDNLRTTLLTTAQDIGAVGVDSKFGWGLLDAGKAMNGPASFPFGDFTADTKGTSDIAYSFRNDISGTGGLIKKGGSQLQLHGNNTYTGKTIIEGGSLVLYGNNKSDMRVETKGALIYNGAASGGSLNSDGIVYLADTDQSGANETVHIKGSLQLDGKGTLYTRLGKLLKVDGTAIIGGKLYMSARGKGAGYLNSTGRRVPFLSAAKIGQDYSFFTNIETDGGLLASLDSVEKTAGSEGDTLSYYVRRGNAARTASAAAHSAPAGLKHAVEQGGSNLENLMVELDASESSATPETVETAAADRTDMPGIRPYGATFRAAAAVQHANAADGVRIFNSLAATVYADSTAAHADMQGRRLKAVSDGLDHNGTGLRVIAQTQQDGGTWEQGGVEGKMRGSTQTVGIAAKTGENTTAAATLGMGRSTWSENSANAKTDSISLFAGIRHDAGDIGYLKGLFSYGRYKNSISRSTGADEHAEGSVNGTLMQLGALGGVNVPFAATGDLTVEGGLRYDLLKQDAFAEKGSALGWSGNSLTEGTLVGLAGLKLSQPLSDKAVLFATAGVERDLNGRDYTVTGGFTGATAATGKTGARNMPHTRLVAGLGADVEFGNGWNGLARYSYAGSKQYGNHSGRVGVGYRF.

The first 27 residues, 1-27, serve as a signal peptide directing secretion; it reads MRTTPTFPTKTFKPTAMALAVATTLSA. Residue Cys-28 is the site of N-palmitoyl cysteine attachment. The S-diacylglycerol cysteine moiety is linked to residue Cys-28. The region spanning 111–483 is the Peptidase S8 domain; it reads NDAYKNLINL…WGLLDAGKAM (373 aa). Active-site charge relay system residues include Asp-139, His-211, and Ser-427. Residues 809 to 1083 enclose the Autotransporter domain; the sequence is DGLDHNGTGL…SGRVGVGYRF (275 aa). 12 beta stranded membrane passes run 819 to 828, 844 to 852, 858 to 866, 883 to 891, 897 to 906, 931 to 941, 948 to 958, 984 to 994, 1000 to 1010, 1041 to 1052, 1057 to 1066, and 1074 to 1083; these read RVIAQTQQDG, TQTVGIAAK, TAAATLGMG, SLFAGIRHD, YLKGLFSYGR, QLGALGGVNVP, LTVEGGLRYDL, VGLAGLKLSQP, VLFATAGVERD, RLVAGLGADVEF, NGLARYSYAG, and SGRVGVGYRF.

It belongs to the peptidase S8 family. In terms of processing, a fusion protein of the first 44 residues with beta-lactamase is lipidated in E.coli, strongly suggesting this is a lipoprotein in situ. The lipidated form is briefly retained on the cell surface which allows it to process its endogenous substrates on the cell surface before the passenger domain is released into the medium.

It is found in the cell outer membrane. It localises to the cell surface. The protein resides in the secreted. In terms of biological role, major human immunogenic protein. Autotransporter with a secreted protease domain involved in processing other autotransporter proteins including App and IgA. Probably autoprocesses to release the about 70 kDa passenger domain. Processes the lactoferrin receptor lipoprotein subunit (LbpB) extracellularly, releasing it from the cell surface. LbpB release protects bacteria against complement-mediated killing by anti-LbpB antibodies. Processes NHBA. Lipidation slows its auto-processing, probably allowing it to act on endogenous substrates on the cell surface before the passenger domain is released into the medium. The C-terminal beta-barrel domain inserts into the outer membrane where it probably exports the N-terminal passenger domain. Both the cell surface protein (Neisserial autotransporter lipoprotein NalP) and the passenger domain cleave human (host) complement factor C3, generating a shorter alpha chain and a longer beta chain than normal. Functionally, plays a role in extracellular-DNA (eDNA) mediated biofilm formation. In some strains (including cc32 strain H44/76 but not cc11 strain B16B6) eDNA stimulates biofilm formation. When NalP is not expressed (and no longer processes NHBA or IgA) biofilm formation increases. This is probably because the number of positively charged, DNA-binding peptides on the cell surface rises, resulting in increased biofilm formation. Its function is as follows. Cleaves human (host) complement factor C3, generating a shorter alpha chain and a longer beta chain than normal. Does not act on mouse or rabbit C3. Cleavage causes C3b degradation by human CFI and CFH, decreases deposition of C3b on the bacteria surface and probably facilitates complement escape. This is Neisserial autotransporter lipoprotein NalP from Neisseria meningitidis serogroup B / serotype 15 (strain H44/76).